A 338-amino-acid polypeptide reads, in one-letter code: Phosphate acyltransferase (338 aa).

The protein belongs to the PlsX family. As to quaternary structure, homodimer. Probably interacts with PlsY.

It localises to the cytoplasm. It catalyses the reaction a fatty acyl-[ACP] + phosphate = an acyl phosphate + holo-[ACP]. Its pathway is lipid metabolism; phospholipid metabolism. Its function is as follows. Catalyzes the reversible formation of acyl-phosphate (acyl-PO(4)) from acyl-[acyl-carrier-protein] (acyl-ACP). This enzyme utilizes acyl-ACP as fatty acyl donor, but not acyl-CoA. This Salinibacter ruber (strain DSM 13855 / M31) protein is Phosphate acyltransferase.